A 269-amino-acid polypeptide reads, in one-letter code: Thyroxine 5-deiodinase (269 aa).

Residues 1–14 (MLPAPHTCCRLLQQ) lie on the Cytoplasmic side of the membrane. The chain crosses the membrane as a helical; Signal-anchor for type II membrane protein span at residues 15–35 (LLACCLLLPRFLLTVLLLWLL). Topologically, residues 36–269 (DFPCVRRRVI…TGNGALVIQV (234 aa)) are extracellular. The active site involves Sec-133. Position 133 (Sec-133) is a non-standard amino acid, selenocysteine.

The protein belongs to the iodothyronine deiodinase family. In terms of assembly, monomer. Homodimer. May undergo minor heretodimerization with DIO1 and DIO2.

Its subcellular location is the cell membrane. It localises to the endosome membrane. The enzyme catalyses 3,3',5'-triiodo-L-thyronine + iodide + A + H(+) = L-thyroxine + AH2. It catalyses the reaction 3,3'-diiodo-L-thyronine + iodide + A + H(+) = 3,3',5-triiodo-L-thyronine + AH2. The catalysed reaction is 3-iodo-L-thyronine + iodide + A + H(+) = 3,5-diiodo-L-thyronine + AH2. It carries out the reaction L-thyronine + iodide + A + H(+) = 3-iodo-L-thyronine + AH2. The enzyme catalyses 3',5'-diiodo-L-thyronine + iodide + A + H(+) = 3,3',5'-triiodo-L-thyronine + AH2. It catalyses the reaction 3'-iodo-L-thyronine + iodide + A + H(+) = 3,3'-diiodo-L-thyronine + AH2. The catalysed reaction is 3,3',5'-triiodothyronamine + iodide + A + H(+) = 3,3',5,5'-tetraiodothyronamine + AH2. It carries out the reaction 3',5'-diiodothyronamine + iodide + A + H(+) = 3,3',5'-triiodothyronamine + AH2. The enzyme catalyses 3,3'-diiodothyronamine + iodide + A + H(+) = 3,3',5-triiodothyronamine + AH2. It catalyses the reaction 3-iodothyronamine + iodide + A + H(+) = 3,5-diiodothyronamine + AH2. The catalysed reaction is 3'-iodothyronamine + iodide + A + H(+) = 3,3'-diiodothyronamine + AH2. It carries out the reaction thyronamine + iodide + A + H(+) = 3-iodothyronamine + AH2. In terms of biological role, plays a crucial role in the metabolism of thyroid hormones (TH) and has specific roles in TH activation and inactivation by deiodination. Catalyzes the deiodination of L-thyroxine (T4) to 3,3',5'-triiodothyronine (rT3), 3,5-diiodothyronine (3,5-T2) to 3-monoiodothyronine (3-T1), rT3 to 3',5'-diiodothyronine (3',5'-T2) and 3,3'-diiodothyronine (3,3'-T2) to 3'-monoiodothyronine (3'-T1) via inner-ring deiodination (IRD). Catalyzes the deiodination of 3,5,3'-triiodothyronine (T3) to 3,3'-diiodothyronine (3,3'-T2) via IRD. Catalyzes the deiodination of 3-T1 to L-thyronine (T0) via outer-ring deiodination (ORD). Catalyzes the tyrosyl ring deiodinations of 3,3',5,5'-tetraiodothyronamine, 3,3',5'-triiodothyronamine, 3,5,3'-triiodothyronamine, 3,5-diiodothyronamine, 3,3'-diiodothyronamine and 3-iodothyronamine. This chain is Thyroxine 5-deiodinase (dio3), found in Aquarana catesbeiana (American bullfrog).